Here is a 618-residue protein sequence, read N- to C-terminus: MCGIVGYAGRNAAAPVIIESLKKLEYRGYDSAGITVLSKGIETYKAVGKIVNLEVEIPKNLGGTVGIGHTRWATHGRPSTKNAHPHNSGGNPGKISLVHNGIIENYMALKEQLTGEGYVFNSETDTEVIAHLVHKHIYGKPDGKEAKCELLVGLREALKEIEGSYALAILSADEPGKLVLARKDSPLVIGLGKGENFAASDVTAFLNHTRDVVFVNDFETAVLSPTSVEIFDREGKPREKKIEKIEWDFEAAEKAGYEHFMLKEIHEQVTAIHNTLAGKVSELEGDIYLKELNLSEDEIRKLARVQILACGTSWHAGLLGKYLFEQLAGIHCDIDICSEYRYRNPVMNEGTLAIAITQSGETADTLAAVREIMSYNCPTLAITNVVGSTITREANSVLYTRAGPEIGVAATKTFTTQLTLLYLLAVKFALVRDRLSPDYVKSFITDLRKVPGQIQQILNQKEAIKECAEGFARSKSYFFLGRHLNYPIALEGALKLKEISYVHAEGFAAGELKHGPIALLDEGTPVVAIATRGQTYEKMLSNIKEVKARDAFVIAVADNKDTEITKYVDVVLRVPQSDELLAPLLSIVVLQLLAYYTALARNCSIDKPRNLAKSVTVE.

Cys2 acts as the Nucleophile; for GATase activity in catalysis. The Glutamine amidotransferase type-2 domain occupies Cys2–Thr226. Positions His69–Lys94 are disordered. SIS domains are found at residues Ser295–Arg434 and Cys467–Pro608. Lys613 acts as the For Fru-6P isomerization activity in catalysis.

As to quaternary structure, homodimer.

It localises to the cytoplasm. It carries out the reaction D-fructose 6-phosphate + L-glutamine = D-glucosamine 6-phosphate + L-glutamate. In terms of biological role, catalyzes the first step in hexosamine metabolism, converting fructose-6P into glucosamine-6P using glutamine as a nitrogen source. This is Glutamine--fructose-6-phosphate aminotransferase [isomerizing] from Methanosarcina acetivorans (strain ATCC 35395 / DSM 2834 / JCM 12185 / C2A).